A 117-amino-acid polypeptide reads, in one-letter code: EVKLLESGGPLVQLGGSLKLSCAASGFDFSRYWMSWVRQAPGKGLEWIGEIDPNSSTINYTPSLKDKFIISRNDAKNTLYLQMSKVRSEDTALYYCARSPYYAMNYWGQGTSVTVSS.

The Ig-like domain occupies 1 to 116 (EVKLLESGGP…WGQGTSVTVS (116 aa)). Cys-22 and Cys-96 are joined by a disulfide.

The sequence is that of Ig heavy chain V region MOPC 173 from Mus musculus (Mouse).